A 401-amino-acid chain; its full sequence is Carbamoyl phosphate synthase small chain (401 aa).

A CPSase region spans residues 1–203 (MTATPAWTIQ…EGYSTLGETD (203 aa)). Residues Ser56, Gly255, and Gly257 each contribute to the L-glutamine site. Residues 207 to 395 (HVVALDYGVK…LNLIREKKGE (189 aa)) form the Glutamine amidotransferase type-1 domain. Cys284 acts as the Nucleophile in catalysis. Residues Leu285, Gln288, Asn326, Gly328, and Phe329 each coordinate L-glutamine. Active-site residues include His368 and Glu370.

Belongs to the CarA family. As to quaternary structure, composed of two chains; the small (or glutamine) chain promotes the hydrolysis of glutamine to ammonia, which is used by the large (or ammonia) chain to synthesize carbamoyl phosphate. Tetramer of heterodimers (alpha,beta)4.

The enzyme catalyses hydrogencarbonate + L-glutamine + 2 ATP + H2O = carbamoyl phosphate + L-glutamate + 2 ADP + phosphate + 2 H(+). It carries out the reaction L-glutamine + H2O = L-glutamate + NH4(+). The protein operates within amino-acid biosynthesis; L-arginine biosynthesis; carbamoyl phosphate from bicarbonate: step 1/1. It participates in pyrimidine metabolism; UMP biosynthesis via de novo pathway; (S)-dihydroorotate from bicarbonate: step 1/3. Small subunit of the glutamine-dependent carbamoyl phosphate synthetase (CPSase). CPSase catalyzes the formation of carbamoyl phosphate from the ammonia moiety of glutamine, carbonate, and phosphate donated by ATP, constituting the first step of 2 biosynthetic pathways, one leading to arginine and/or urea and the other to pyrimidine nucleotides. The small subunit (glutamine amidotransferase) binds and cleaves glutamine to supply the large subunit with the substrate ammonia. The chain is Carbamoyl phosphate synthase small chain from Rhizobium meliloti (strain 1021) (Ensifer meliloti).